The primary structure comprises 187 residues: Elongation factor P (187 aa).

This sequence belongs to the elongation factor P family.

It localises to the cytoplasm. It functions in the pathway protein biosynthesis; polypeptide chain elongation. Involved in peptide bond synthesis. Stimulates efficient translation and peptide-bond synthesis on native or reconstituted 70S ribosomes in vitro. Probably functions indirectly by altering the affinity of the ribosome for aminoacyl-tRNA, thus increasing their reactivity as acceptors for peptidyl transferase. The polypeptide is Elongation factor P (efp) (Synechocystis sp. (strain ATCC 27184 / PCC 6803 / Kazusa)).